A 346-amino-acid polypeptide reads, in one-letter code: Sensor protein kinase GraS (346 aa).

The next 2 membrane-spanning stretches (helical) occupy residues M15 to D35 and L43 to F63. Residues E126–N332 form the Histidine kinase domain.

As to quaternary structure, interacts with GraX.

Its subcellular location is the cell membrane. The enzyme catalyses ATP + protein L-histidine = ADP + protein N-phospho-L-histidine.. Member of the two-component regulatory system GraR/GraS involved in resistance against cationic antimicrobial peptides (CAMPs). Functions as a sensor protein kinase which phosphorylates GraR through the auxiliary protein GraX. In turn, GraR up-regulates many genes such as adhesins, exoproteins, transporters, toxins, and proteins involved in cell wall synthesis. Down-regulates the expression of many genes involved in RNA and amino acid synthesis or glycolysis. The sequence is that of Sensor protein kinase GraS (graS) from Staphylococcus aureus (strain MSSA476).